The chain runs to 1070 residues: Duffy receptor (1070 aa).

Positions 1–20 are cleaved as a signal peptide; sequence MKGKNRSLFVLLVLLLLHKV. Over 21 to 1007 the chain is Extracellular; it reads NNVLLERTIE…CFTKGGFKDK (987 aa). Residues 116-146 form a disordered region; the sequence is YMEGKDGGDKTGEEKDGEHKTDSKTDNGKGA. A compositionally biased stretch (basic and acidic residues) spans 118–142; the sequence is EGKDGGDKTGEEKDGEHKTDSKTDN. Asparagine 183 is a glycosylation site (N-linked (GlcNAc...) asparagine). The pvRII region; mediates ACKR1 binding stretch occupies residues 211 to 521; sequence NTVMKNCNYK…AKKNTQEVVT (311 aa). 2 disulfide bridges follow: cysteine 217/cysteine 246 and cysteine 230/cysteine 237. N-linked (GlcNAc...) asparagine glycosylation is found at asparagine 255, asparagine 351, and asparagine 420. 4 disulfides stabilise this stretch: cysteine 300/cysteine 377, cysteine 415/cysteine 432, cysteine 427/cysteine 507, and cysteine 436/cysteine 505. Polar residues-rich tracts occupy residues 525–542, 554–569, and 629–642; these read NAAK…QPVD, THGN…TTGK, and GASN…TVEA. The disordered stretch occupies residues 525–906; it reads NAAKSQATNS…HLNSNNNLSN (382 aa). Positions 697–711 are enriched in basic and acidic residues; that stretch reads ETGKGQDNDMAKATK. Positions 712-728 are enriched in low complexity; that stretch reads DSSNSSDGTSSATGDTT. N-linked (GlcNAc...) asparagine glycosylation is present at asparagine 715. The segment covering 730 to 748 has biased composition (basic and acidic residues); that stretch reads AVDREINKGVPEDRDKTVG. Asparagine 787 carries an N-linked (GlcNAc...) asparagine glycan. Over residues 808–817 the composition is skewed to low complexity; the sequence is LSKTESLEST. An N-linked (GlcNAc...) asparagine glycan is attached at asparagine 825. Composition is skewed to basic and acidic residues over residues 835–849 and 865–889; these read NGGK…DFKS and AEGH…KDTF. Residues 895-906 are compositionally biased toward low complexity; it reads SHHLNSNNNLSN. Residues asparagine 903 and asparagine 938 are each glycosylated (N-linked (GlcNAc...) asparagine). A helical membrane pass occupies residues 1008-1025; the sequence is TYFAAAGALLILLLLIAS. Over 1026–1070 the chain is Cytoplasmic; it reads RKMIKNDSEEATFNEFEEYCDNIHRIPLMPNNIEHMQPSTPLDYS.

In terms of assembly, homodimer; dimerization (via PvRII region) is promoted by the interaction with human ACKR1. Interacts (via PvRII region) with human ACKR1 (via N-terminal extracellular domain).

The protein localises to the membrane. Binds to the human erythrocyte Duffy blood group determinant (ACKR1). The protein is Duffy receptor (PVDR) of Plasmodium vivax (strain Salvador I).